Reading from the N-terminus, the 333-residue chain is UDP-N-acetylglucosamine--N-acetylmuramyl-(pentapeptide) pyrophosphoryl-undecaprenol N-acetylglucosamine transferase (333 aa).

UDP-N-acetyl-alpha-D-glucosamine contacts are provided by residues 10 to 12 (TGG), Asn-124, Ser-177, and Gln-275.

It belongs to the glycosyltransferase 28 family. MurG subfamily.

It localises to the cell inner membrane. It carries out the reaction di-trans,octa-cis-undecaprenyl diphospho-N-acetyl-alpha-D-muramoyl-L-alanyl-D-glutamyl-meso-2,6-diaminopimeloyl-D-alanyl-D-alanine + UDP-N-acetyl-alpha-D-glucosamine = di-trans,octa-cis-undecaprenyl diphospho-[N-acetyl-alpha-D-glucosaminyl-(1-&gt;4)]-N-acetyl-alpha-D-muramoyl-L-alanyl-D-glutamyl-meso-2,6-diaminopimeloyl-D-alanyl-D-alanine + UDP + H(+). It participates in cell wall biogenesis; peptidoglycan biosynthesis. In terms of biological role, cell wall formation. Catalyzes the transfer of a GlcNAc subunit on undecaprenyl-pyrophosphoryl-MurNAc-pentapeptide (lipid intermediate I) to form undecaprenyl-pyrophosphoryl-MurNAc-(pentapeptide)GlcNAc (lipid intermediate II). This Nitratiruptor sp. (strain SB155-2) protein is UDP-N-acetylglucosamine--N-acetylmuramyl-(pentapeptide) pyrophosphoryl-undecaprenol N-acetylglucosamine transferase.